A 484-amino-acid polypeptide reads, in one-letter code: Protein nucleotidyltransferase YdiU (484 aa).

Residues G81, G83, R84, K103, D115, G116, R166, and R173 each contribute to the ATP site. The Proton acceptor role is filled by D244. Mg(2+)-binding residues include N245 and D254. D254 contributes to the ATP binding site.

The protein belongs to the SELO family. Mg(2+) is required as a cofactor. It depends on Mn(2+) as a cofactor.

The catalysed reaction is L-seryl-[protein] + ATP = 3-O-(5'-adenylyl)-L-seryl-[protein] + diphosphate. It carries out the reaction L-threonyl-[protein] + ATP = 3-O-(5'-adenylyl)-L-threonyl-[protein] + diphosphate. The enzyme catalyses L-tyrosyl-[protein] + ATP = O-(5'-adenylyl)-L-tyrosyl-[protein] + diphosphate. It catalyses the reaction L-histidyl-[protein] + UTP = N(tele)-(5'-uridylyl)-L-histidyl-[protein] + diphosphate. The catalysed reaction is L-seryl-[protein] + UTP = O-(5'-uridylyl)-L-seryl-[protein] + diphosphate. It carries out the reaction L-tyrosyl-[protein] + UTP = O-(5'-uridylyl)-L-tyrosyl-[protein] + diphosphate. Functionally, nucleotidyltransferase involved in the post-translational modification of proteins. It can catalyze the addition of adenosine monophosphate (AMP) or uridine monophosphate (UMP) to a protein, resulting in modifications known as AMPylation and UMPylation. This chain is Protein nucleotidyltransferase YdiU, found in Shewanella sp. (strain MR-7).